The primary structure comprises 93 residues: Alpha-defensin 9 (93 aa).

The signal sequence occupies residues 1–19 (MKTLVLLSALVLLAFQVQA). Positions 20–58 (DPIQNTDEETKTEEQPGEEDQAVSVSFGDPEGSSLQEES) are excised as a propeptide. A disordered region spans residues 23 to 56 (QNTDEETKTEEQPGEEDQAVSVSFGDPEGSSLQE). 3 cysteine pairs are disulfide-bonded: cysteine 64–cysteine 92, cysteine 66–cysteine 81, and cysteine 71–cysteine 91.

The protein belongs to the alpha-defensin family. In terms of tissue distribution, paneth cells of the small bowel.

Its subcellular location is the secreted. Functionally, probably contributes to the antimicrobial barrier function of the small bowel mucosa. The protein is Alpha-defensin 9 (Defa9) of Mus musculus (Mouse).